A 317-amino-acid chain; its full sequence is Enoyl-CoA delta isomerase 3, peroxisomal (317 aa).

The region spanning 1 to 46 (MPKPGVFNFVNKATWDARNALGSLPKETARKNYVDLVSSLSSSSEA) is the ACB domain. Residues 40–60 (LSSSSEAPSQGKRGADEKARE) form a disordered region. Position 120–124 (120–124 (SGNDL)) interacts with substrate. A Microbody targeting signal motif is present at residues 315–317 (AKL).

This sequence belongs to the enoyl-CoA hydratase/isomerase family. As to expression, expressed at high levels in the kidney. Also detected at very low levels in the duodenum, jejunum, ileum, heart, liver, lung, and brown adipose tissue (at protein level). In the kidney, expression seems to be localized mainly to the proximal tubule.

It localises to the peroxisome. The catalysed reaction is a (3Z)-enoyl-CoA = a 4-saturated (2E)-enoyl-CoA. It carries out the reaction a (3E)-enoyl-CoA = a 4-saturated (2E)-enoyl-CoA. The enzyme catalyses (3E)-nonenoyl-CoA = (2E)-nonenoyl-CoA. In terms of biological role, catalyzes the isomerization of trans-3-nonenoyl-CoA into trans-2-nonenoyl-CoA. May also have activity towards other enoyl-CoA species. The polypeptide is Enoyl-CoA delta isomerase 3, peroxisomal (Mus musculus (Mouse)).